A 1378-amino-acid polypeptide reads, in one-letter code: MGLPLPLLQSSLLLMLLLRLSAASTNLNWQCPRIPYAASRDFSVKYVVPSFSAGGRVQATAAYEDSTNSAVFVATRNHLHVLGPDLQFIENLTTGPIGNPGCQTCASCGPGPHGPPKDTDTLVLVMEPGLPALVSCGSTLQGRCFLHELEPRGKALHLAAPACLFSANNNKPEACTDCVASPLGTRVTVVEQGHASYFYVASSLDPELAASFSPRSVSIRRLKSDTSGFQPGFPSLSVLPKYLASYLIKYVYSFHSGDFVYFLTVQPISVTSPPSALHTRLVRLNAVEPEIGDYRELVLDCHFAPKRRRRGAPEGTQPYPVLQAAHSAPVDAKLAVELSISEGQEVLFGVFVTVKDGGSGMGPNSVVCAFPIYHLNILIEEGVEYCCHSSNSSSLLSRGLDFFQTPSFCPNPPGGEASGPSSRCHYFPLMVHASFTRVDLFNGLLGSVKVTALHVTRLGNVTVAHMGTVDGRVLQVEIARSLNYLLYVSNFSLGSSGQPVHRDVSRLGNDLLFASGDQVFKVPIQGPGCRHFLTCWRCLRAQRFMGCGWCGDRCDRQKECPGSWQQDHCPPEISEFYPHSGPLRGTTRLTLCGSNFYLRPDDVVPEGTHQITVGQSPCRLLPKDSSSPRPGSLKEFIQELECELEPLVTQAVGTTNISLVITNMPAGKHFRVEGISVQEGFSFVEPVLTSIKPDFGPRAGGTYLTLEGQSLSVGTSRAVLVNGTQCRLEQVNEEQILCVTPPGAGTARVPLHLQIGGAEVPGSWTFHYKEDPIVLDISPKCGYSGSHIMIHGQHLTSAWHFTLSFHDGQSTVESRCAGQFVEQQQRRCRLPEYVVRNPQGWATGNLSVWGDGAAGFTLPGFRFLPPPSPLRAGLVELKPEEHSVKVEYVGLGAVADCVTVNMTVGGEVCQHELRGDVVICPLPPSLQLGKDGVPLQVCVDGGCHILSQVVRSSPGRASQRILLIALLVLILLVAVLAVALIFNSRRRKKQLGAHSLSPTTLSDINDTASGAPNHEESSESRDGTSVPLLRTESIRLQDLDRMLLAEVKDVLIPHEQVVIHTDQVIGKGHFGVVYHGEYTDGAQNQTHCAIKSLSRITEVQEVEAFLREGLLMRGLHHPNILALIGIMLPPEGLPRVLLPYMRHGDLLHFIRSPQRNPTVKDLVSFGLQVACGMEYLAEQKFVHRDLAARNCMLDESFTVKVADFGLARGVLDKEYYSVRQHRHARLPVKWMALESLQTYRFTTKSDVWSFGVLLWELLTRGAPPYPHIDPFDLSHFLAQGRRLPQPEYCPDSLYHVMLRCWEADPAARPTFRALVLEVKQVVASLLGDHYVQLTAAYVNVGPRAVDDGSVPPEQVQPSPQHCRSTSKPRPLSEPPLPT.

The first 23 residues, 1 to 23 (MGLPLPLLQSSLLLMLLLRLSAA), serve as a signal peptide directing secretion. The Extracellular segment spans residues 25–960 (TNLNWQCPRI…RSSPGRASQR (936 aa)). Residues 33-524 (RIPYAASRDF…SGDQVFKVPI (492 aa)) form the Sema domain. N-linked (GlcNAc...) asparagine glycosylation occurs at Asn-91. 7 disulfides stabilise this stretch: Cys-102/Cys-105, Cys-108/Cys-163, Cys-136/Cys-144, Cys-175/Cys-178, Cys-301/Cys-368, Cys-386/Cys-409, and Cys-387/Cys-424. 3 N-linked (GlcNAc...) asparagine glycosylation sites follow: Asn-391, Asn-460, and Asn-490. Cystine bridges form between Cys-529–Cys-547, Cys-535–Cys-569, Cys-538–Cys-554, and Cys-550–Cys-560. 3 consecutive IPT/TIG domains span residues 571-673 (PEIS…FRVE), 686-769 (PVLT…FHYK), and 772-864 (PIVL…FRFL). 4 N-linked (GlcNAc...) asparagine glycosylation sites follow: Asn-656, Asn-722, Asn-845, and Asn-901. Residues 961–981 (ILLIALLVLILLVAVLAVALI) form a helical membrane-spanning segment. The Cytoplasmic segment spans residues 982–1378 (FNSRRRKKQL…RPLSEPPLPT (397 aa)). Residues 1002-1026 (SDINDTASGAPNHEESSESRDGTSV) form a disordered region. Residues 1013–1022 (NHEESSESRD) show a composition bias toward basic and acidic residues. The Protein kinase domain occupies 1059–1322 (IHTDQVIGKG…ALVLEVKQVV (264 aa)). ATP is bound by residues 1065 to 1073 (IGKGHFGVV), Lys-1091, and 1138 to 1141 (LPYM). Residue Asp-1185 is the Proton acceptor of the active site. ATP is bound at residue Arg-1189. Phosphotyrosine; by autocatalysis occurs at positions 1215, 1216, 1330, and 1337. Positions 1347–1378 (DGSVPPEQVQPSPQHCRSTSKPRPLSEPPLPT) are disordered. A compositionally biased stretch (low complexity) spans 1349-1360 (SVPPEQVQPSPQ).

This sequence belongs to the protein kinase superfamily. Tyr protein kinase family. Heterodimer of an alpha chain and a beta chain which are disulfide linked. Binds PLXNB1. Associates with and is negatively regulated by HYAL2. Interacts when phosphorylated with downstream effectors including PIK3R1, PCLG1, GRB2 and GAB1. Interacts with integrin beta1/ITGB1 in a ligand-independent fashion. Isoform sf-Stk forms covalent heterodimers with friend spleen focus-forming virus (FSFFV) gp55. Post-translationally, proteolytic processing yields the two subunits. In terms of processing, autophosphorylated in response to ligand binding on Tyr-1215 and Tyr-1216 in the kinase domain leading to further phosphorylation of Tyr-1330 and Tyr-1337 in the C-terminal multifunctional docking site. Ubiquitinated. Ubiquitination by CBL regulates the receptor stability and activity through proteasomal degradation. Post-translationally, O-mannosylation of IPT/TIG domains on Thr or Ser residues by TMEM260 is required for protein maturation. O-mannosylated residues are composed of single mannose glycans that are not elongated or modified. In terms of tissue distribution, expressed in liver, skin, lung, brain, testis and kidney.

It is found in the membrane. The catalysed reaction is L-tyrosyl-[protein] + ATP = O-phospho-L-tyrosyl-[protein] + ADP + H(+). In its inactive state, the C-terminal tail interacts with the catalytic domain and inhibits the kinase activity. Upon ligand binding, the C-terminal tail is displaced and becomes phosphorylated, thus increasing the kinase activity. Functionally, receptor tyrosine kinase that transduces signals from the extracellular matrix into the cytoplasm by binding to MST1 ligand. Regulates many physiological processes including cell survival, migration and differentiation. Ligand binding at the cell surface induces autophosphorylation of RON on its intracellular domain that provides docking sites for downstream signaling molecules. Following activation by ligand, interacts with the PI3-kinase subunit PIK3R1, PLCG1 or the adapter GAB1. Recruitment of these downstream effectors by RON leads to the activation of several signaling cascades including the RAS-ERK, PI3 kinase-AKT, or PLCgamma-PKC. RON signaling activates the wound healing response by promoting epithelial cell migration, proliferation as well as survival at the wound site. Also plays a role in the innate immune response by regulating the migration and phagocytic activity of macrophages. Alternatively, RON can also promote signals such as cell migration and proliferation in response to growth factors other than MST1 ligand. The protein is Macrophage-stimulating protein receptor (Mst1r) of Mus musculus (Mouse).